Reading from the N-terminus, the 1102-residue chain is Endocytosis protein end4 (1102 aa).

The 131-residue stretch at 9–139 (DHMQSDASLM…SFHAQHPEFN (131 aa)) folds into the ENTH domain. The disordered stretch occupies residues 265–334 (PHDPPDLEGD…SEPEPIQDFW (70 aa)). Over residues 292 to 305 (TGASTIAPQPTGTS) the composition is skewed to polar residues. Positions 338–661 (TLDQQLAAQQ…ESLLQLSKLQ (324 aa)) form a coiled coil. The I/LWEQ domain occupies 858 to 1100 (LLNAPGENIE…DMRKTSYHVA (243 aa)).

The protein belongs to the SLA2 family.

It is found in the cytoplasm. The protein resides in the cytoskeleton. Functionally, required for cellular morphogenesis and polarization of the cortical cytoskeleton. Required for establishment of new polarized growth zones where it acts in actin organization. Involved plasma membrane internalization and is essential for fluid-phase endocytosis. The sequence is that of Endocytosis protein end4 (end4) from Schizosaccharomyces pombe (strain 972 / ATCC 24843) (Fission yeast).